We begin with the raw amino-acid sequence, 230 residues long: Sugar fermentation stimulation protein homolog (230 aa).

This sequence belongs to the SfsA family.

This is Sugar fermentation stimulation protein homolog from Clostridium perfringens (strain SM101 / Type A).